The chain runs to 672 residues: uncharacterized protein (672 aa).

Belongs to the MG032/MG096/MG288 family.

This is an uncharacterized protein from Mycoplasma pneumoniae (strain ATCC 29342 / M129 / Subtype 1) (Mycoplasmoides pneumoniae).